Reading from the N-terminus, the 277-residue chain is Caspase-3 (277 aa).

Met1 is subject to N-acetylmethionine. 2 propeptides span residues 1–9 (MENNKTSVD) and 10–28 (SKSI…KSVD). N6-acetyllysine is present on Lys11. Ser26 carries the post-translational modification Phosphoserine. Active-site residues include His121 and Cys163. Cys163 is subject to S-nitrosocysteine; in inhibited form.

Belongs to the peptidase C14A family. As to quaternary structure, heterotetramer that consists of two anti-parallel arranged heterodimers, each one formed by a 17 kDa (p17) and a 12 kDa (p12) subunit. Interacts with BIRC6/bruce. Cleavage by granzyme B, caspase-6, caspase-8 and caspase-10 generates the two active subunits. Additional processing of the propeptides is likely due to the autocatalytic activity of the activated protease. Active heterodimers between the small subunit of caspase-7 protease and the large subunit of caspase-3 also occur and vice versa. In terms of processing, S-nitrosylated on its catalytic site cysteine in unstimulated cell lines and denitrosylated upon activation of the Fas apoptotic pathway, associated with an increase in intracellular caspase activity. Fas therefore activates caspase-3 not only by inducing the cleavage of the caspase zymogen to its active subunits, but also by stimulating the denitrosylation of its active site thiol. Post-translationally, ubiquitinated by BIRC6; this activity is inhibited by DIABLO/SMAC. As to expression, highest expression in spleen, lung, liver, kidney and heart. Lower expression in brain, skeletal muscle and testis.

It is found in the cytoplasm. The catalysed reaction is Strict requirement for an Asp residue at positions P1 and P4. It has a preferred cleavage sequence of Asp-Xaa-Xaa-Asp-|- with a hydrophobic amino-acid residue at P2 and a hydrophilic amino-acid residue at P3, although Val or Ala are also accepted at this position.. Its activity is regulated as follows. Inhibited by BIRC6; following inhibition of BIRC6-caspase binding by DIABLO/SMAC, BIRC6 is subjected to caspase cleavage, leading to an increase in active caspases. Functionally, thiol protease that acts as a major effector caspase involved in the execution phase of apoptosis. Following cleavage and activation by initiator caspases (CASP8, CASP9 and/or CASP10), mediates execution of apoptosis by catalyzing cleavage of many proteins. At the onset of apoptosis, it proteolytically cleaves poly(ADP-ribose) polymerase PARP1 at a '216-Asp-|-Gly-217' bond. Cleaves and activates sterol regulatory element binding proteins (SREBPs) between the basic helix-loop-helix leucine zipper domain and the membrane attachment domain. Cleaves and activates caspase-6, -7 and -9 (CASP6, CASP7 and CASP9, respectively). Cleaves and inactivates interleukin-18 (IL18). Triggers cell adhesion in sympathetic neurons through RET cleavage. Cleaves IL-1 beta between an Asp and an Ala, releasing the mature cytokine which is involved in a variety of inflammatory processes. Cleaves and inhibits serine/threonine-protein kinase AKT1 in response to oxidative stress. Acts as an inhibitor of type I interferon production during virus-induced apoptosis by mediating cleavage of antiviral proteins CGAS, IRF3 and MAVS, thereby preventing cytokine overproduction. Also involved in pyroptosis by mediating cleavage and activation of gasdermin-E (GSDME). Cleaves XRCC4 and phospholipid scramblase proteins XKR4, XKR8 and XKR9, leading to promote phosphatidylserine exposure on apoptotic cell surface. Cleaves BIRC6 following inhibition of BIRC6-caspase binding by DIABLO/SMAC. This is Caspase-3 (Casp3) from Mus musculus (Mouse).